We begin with the raw amino-acid sequence, 91 residues long: Acylphosphatase (91 aa).

The Acylphosphatase-like domain maps to 3 to 91; it reads TVTMKVTGLV…EKFTRFSVVY (89 aa). Residues Arg18 and Asn36 contribute to the active site.

Belongs to the acylphosphatase family.

It catalyses the reaction an acyl phosphate + H2O = a carboxylate + phosphate + H(+). In Lactobacillus gasseri (strain ATCC 33323 / DSM 20243 / BCRC 14619 / CIP 102991 / JCM 1131 / KCTC 3163 / NCIMB 11718 / NCTC 13722 / AM63), this protein is Acylphosphatase (acyP).